The chain runs to 98 residues: Small ribosomal subunit protein eS24 (98 aa).

Belongs to the eukaryotic ribosomal protein eS24 family.

This chain is Small ribosomal subunit protein eS24, found in Thermococcus sibiricus (strain DSM 12597 / MM 739).